The following is a 667-amino-acid chain: Probable potassium transport system protein Kup (667 aa).

12 helical membrane passes run 16–36, 58–78, 101–121, 146–166, 167–187, 221–241, 253–273, 294–314, 343–363, 373–393, 399–419, and 431–451; these read GFII…LYTM, VSLI…LIAL, WLII…ALTP, TNVI…QRFG, TGVI…VLGI, IFIL…YSDL, WPFV…WILA, VYLV…LISG, LYIP…VLYF, YGLA…YYLI, PLLA…FFLA, and VVVL…GTVI.

It belongs to the HAK/KUP transporter (TC 2.A.72) family.

The protein localises to the cell membrane. The catalysed reaction is K(+)(in) + H(+)(in) = K(+)(out) + H(+)(out). Its function is as follows. Transport of potassium into the cell. Likely operates as a K(+):H(+) symporter. The chain is Probable potassium transport system protein Kup from Streptococcus equi subsp. zooepidemicus (strain MGCS10565).